Reading from the N-terminus, the 280-residue chain is Phosphatidylserine decarboxylase proenzyme (280 aa).

Active-site charge relay system; for autoendoproteolytic cleavage activity residues include aspartate 88, histidine 144, and serine 247. Serine 247 (schiff-base intermediate with substrate; via pyruvic acid; for decarboxylase activity) is an active-site residue. Serine 247 carries the post-translational modification Pyruvic acid (Ser); by autocatalysis.

Belongs to the phosphatidylserine decarboxylase family. PSD-B subfamily. Prokaryotic type I sub-subfamily. As to quaternary structure, heterodimer of a large membrane-associated beta subunit and a small pyruvoyl-containing alpha subunit. Pyruvate is required as a cofactor. Is synthesized initially as an inactive proenzyme. Formation of the active enzyme involves a self-maturation process in which the active site pyruvoyl group is generated from an internal serine residue via an autocatalytic post-translational modification. Two non-identical subunits are generated from the proenzyme in this reaction, and the pyruvate is formed at the N-terminus of the alpha chain, which is derived from the carboxyl end of the proenzyme. The autoendoproteolytic cleavage occurs by a canonical serine protease mechanism, in which the side chain hydroxyl group of the serine supplies its oxygen atom to form the C-terminus of the beta chain, while the remainder of the serine residue undergoes an oxidative deamination to produce ammonia and the pyruvoyl prosthetic group on the alpha chain. During this reaction, the Ser that is part of the protease active site of the proenzyme becomes the pyruvoyl prosthetic group, which constitutes an essential element of the active site of the mature decarboxylase.

It localises to the cell membrane. The enzyme catalyses a 1,2-diacyl-sn-glycero-3-phospho-L-serine + H(+) = a 1,2-diacyl-sn-glycero-3-phosphoethanolamine + CO2. Its pathway is phospholipid metabolism; phosphatidylethanolamine biosynthesis; phosphatidylethanolamine from CDP-diacylglycerol: step 2/2. Functionally, catalyzes the formation of phosphatidylethanolamine (PtdEtn) from phosphatidylserine (PtdSer). The chain is Phosphatidylserine decarboxylase proenzyme from Xanthomonas axonopodis pv. citri (strain 306).